A 593-amino-acid chain; its full sequence is Tyrosine-protein phosphatase non-receptor type 9 (593 aa).

N-acetylmethionine is present on Met1. Positions 1-20 (MEPATAPRPDMAPELTPEEE) are disordered. The CRAL-TRIO domain occupies 84-243 (EEPLRSEILS…NLGGYVKIDL (160 aa)). The 272-residue stretch at 303 to 574 (IYEEYEDIRR…YFCYKAILEF (272 aa)) folds into the Tyrosine-protein phosphatase domain. Residue Cys515 is the Phosphocysteine intermediate of the active site.

This sequence belongs to the protein-tyrosine phosphatase family. Non-receptor class 3 subfamily.

It localises to the cytoplasm. It carries out the reaction O-phospho-L-tyrosyl-[protein] + H2O = L-tyrosyl-[protein] + phosphate. In terms of biological role, protein-tyrosine phosphatase that could participate in the transfer of hydrophobic ligands or in functions of the Golgi apparatus. In Mus musculus (Mouse), this protein is Tyrosine-protein phosphatase non-receptor type 9 (Ptpn9).